The sequence spans 108 residues: Probable 4-amino-4-deoxy-L-arabinose-phosphoundecaprenol flippase subunit ArnE (108 aa).

3 consecutive transmembrane segments (helical) span residues 32–52, 58–78, and 85–105; these read PLLL…LVWL, VPVG…TLAA, and TLSL…AIMG. The region spanning 34-106 is the EamA domain; sequence LLWLGGSVLL…IVAGVAIMGS (73 aa).

The protein belongs to the ArnE family. Heterodimer of ArnE and ArnF.

Its subcellular location is the cell inner membrane. It participates in bacterial outer membrane biogenesis; lipopolysaccharide biosynthesis. Its function is as follows. Translocates 4-amino-4-deoxy-L-arabinose-phosphoundecaprenol (alpha-L-Ara4N-phosphoundecaprenol) from the cytoplasmic to the periplasmic side of the inner membrane. The sequence is that of Probable 4-amino-4-deoxy-L-arabinose-phosphoundecaprenol flippase subunit ArnE from Erwinia tasmaniensis (strain DSM 17950 / CFBP 7177 / CIP 109463 / NCPPB 4357 / Et1/99).